We begin with the raw amino-acid sequence, 400 residues long: Phosphoglycerate kinase (400 aa).

Residues 22–24, R38, 61–64, R119, and R152 each bind substrate; these read DFN and HLGR. Residues K205, G296, E327, and 353-356 each bind ATP; that span reads GGDT.

Belongs to the phosphoglycerate kinase family. Monomer.

The protein resides in the cytoplasm. The enzyme catalyses (2R)-3-phosphoglycerate + ATP = (2R)-3-phospho-glyceroyl phosphate + ADP. It participates in carbohydrate degradation; glycolysis; pyruvate from D-glyceraldehyde 3-phosphate: step 2/5. The sequence is that of Phosphoglycerate kinase from Campylobacter jejuni subsp. jejuni serotype O:6 (strain 81116 / NCTC 11828).